A 310-amino-acid polypeptide reads, in one-letter code: Ribosome production factor 2 homolog (310 aa).

Positions 29–239 constitute a Brix domain; the sequence is KKTLILHGTK…VRRHRYPVES (211 aa). The interval 281-310 is disordered; that stretch reads LSNDVKGLKRERREAKKNKDHSKKQKINPE. Over residues 295–310 the composition is skewed to basic residues; that stretch reads AKKNKDHSKKQKINPE.

This sequence belongs to the RPF2 family.

The protein localises to the nucleus. Its subcellular location is the nucleolus. The protein is Ribosome production factor 2 homolog of Oryza sativa subsp. japonica (Rice).